Reading from the N-terminus, the 510-residue chain is ATP synthase subunit alpha (510 aa).

169–176 (GDRQTGKT) provides a ligand contact to ATP.

The protein belongs to the ATPase alpha/beta chains family. F-type ATPases have 2 components, CF(1) - the catalytic core - and CF(0) - the membrane proton channel. CF(1) has five subunits: alpha(3), beta(3), gamma(1), delta(1), epsilon(1). CF(0) has three main subunits: a(1), b(2) and c(9-12). The alpha and beta chains form an alternating ring which encloses part of the gamma chain. CF(1) is attached to CF(0) by a central stalk formed by the gamma and epsilon chains, while a peripheral stalk is formed by the delta and b chains.

Its subcellular location is the cell inner membrane. It catalyses the reaction ATP + H2O + 4 H(+)(in) = ADP + phosphate + 5 H(+)(out). Its function is as follows. Produces ATP from ADP in the presence of a proton gradient across the membrane. The alpha chain is a regulatory subunit. This chain is ATP synthase subunit alpha, found in Rickettsia felis (strain ATCC VR-1525 / URRWXCal2) (Rickettsia azadi).